A 498-amino-acid chain; its full sequence is Tumor necrosis factor receptor superfamily member 8 (498 aa).

The first 18 residues, 1-18 (MSALLTAAGLLFLGMLQA), serve as a signal peptide directing secretion. Over 19–287 (FPTDRPLKTT…STGTPFLDPG (269 aa)) the chain is Extracellular. 2 TNFR-Cys repeats span residues 68–105 (QCAP…PRIC) and 106–146 (ECQP…DTIC). 5 cysteine pairs are disulfide-bonded: Cys-69/Cys-81, Cys-84/Cys-97, Cys-87/Cys-105, Cys-107/Cys-121, and Cys-128/Cys-146. A disordered region spans residues 142–168 (KDTICELPSSGSGPNCSNPGDRKTLTS). The segment covering 149–160 (PSSGSGPNCSNP) has biased composition (low complexity). N-linked (GlcNAc...) asparagine glycans are attached at residues Asn-156, Asn-183, and Asn-229. The interval 204–256 (ELVKVPESSSSKAREPSPDPGNAEKNMTLELPSPGTLPDISTSENSKEPASTA) is disordered. Polar residues predominate over residues 242–256 (DISTSENSKEPASTA). A helical membrane pass occupies residues 288–308 (PVLFWVAMVVLLVGSGSFLLC). Topologically, residues 309-498 (YWKACRRRFQ…DHGPTTVSEK (190 aa)) are cytoplasmic. Positions 338-358 (DSCPTEKLTQPQRSGSVTDPS) are enriched in polar residues. Disordered stretches follow at residues 338 to 370 (DSCP…SPPP), 389 to 411 (LDDS…VSTE), and 436 to 498 (EVPE…VSEK). Phosphoserine is present on residues Ser-339 and Ser-353. 3 stretches are compositionally biased toward basic and acidic residues: residues 402–411 (EPPEPRVSTE), 456–465 (EVDHAPHYPE), and 484–498 (EGGK…VSEK).

It belongs to the TNFR8 family. As to quaternary structure, interacts with TRAF1, TRAF2, TRAF3 and TRAF5. Detected in thymus and in activated splenocytes.

The protein resides in the cell membrane. Receptor for TNFSF8/CD30L. May play a role in the regulation of cellular growth and transformation of activated lymphoblasts. Regulates gene expression through activation of NF-kappa-B. The chain is Tumor necrosis factor receptor superfamily member 8 from Mus musculus (Mouse).